The following is an 80-amino-acid chain: U1-nemetoxin-Csp1a (80 aa).

Residues 1–20 (MKYFVVFCVLIIAVAAFTSA) form the signal peptide. Residues 21-41 (AEDGEVFEENPLEFPKTIQKR) constitute a propeptide that is removed on maturation. Intrachain disulfides connect cysteine 42-cysteine 56, cysteine 49-cysteine 60, cysteine 55-cysteine 77, and cysteine 66-cysteine 73.

The protein belongs to the neurotoxin 13 (insecticidal toxin ABC) family. 02 (Calisoga) subfamily. Expressed by the venom gland.

It localises to the secreted. Its function is as follows. Causes paralysis to insect larvae (H.virescens). This toxin is active only on insects. This Calisoga sp. (Spider) protein is U1-nemetoxin-Csp1a.